Consider the following 279-residue polypeptide: MSHERPPRNDIPRNLSFIAALTERAYYRSQRPSLEEESEEEPGEGGTRPGARSRAHVPGRGRRARSAPAGGGGARTARSRSPDTRKRVRFPDALGLELAVVRRFRPGEPPRVPRHVQVQLQRDALRHFAPCPPRTRGLQDARIALEPALEPGFAARLQAQRICLERADAGPLGVAGSARVLDLAYEKRVSVRWSADGWRSLRESPASYAGPAPAPPRADRFAFRLPAPPVGGALLFALRYRVTGREFWDNNGGRDYALLGPEHPGGAGAAEPQGWIHFI.

Phosphoserine is present on residues Ser-16 and Ser-33. The interval 28–89 (RSQRPSLEEE…RSPDTRKRVR (62 aa)) is disordered. The span at 51–65 (ARSRAHVPGRGRRAR) shows a compositional bias: basic residues. Ser-66 is modified (phosphoserine). The PP1-binding motif motif lies at 87-90 (RVRF). The region spanning 154 to 259 (AARLQAQRIC…NNGGRDYALL (106 aa)) is the CBM21 domain. The segment at 176 to 198 (GSARVLDLAYEKRVSVRWSADGW) is glycogen-binding motif. The segment at 248 to 256 (WDNNGGRDY) is substrate-binding motif.

Expressed in liver and heart, with low levels in skeletal muscle.

Its function is as follows. Acts as a glycogen-targeting subunit for PP1. PP1 is involved in glycogen metabolism and contributes to the activation of glycogen synthase leading to an increase in glycogen synthesis. The chain is Protein phosphatase 1 regulatory subunit 3E (Ppp1r3e) from Rattus norvegicus (Rat).